The following is a 379-amino-acid chain: Tryptophan 2,3-dioxygenase (379 aa).

Residues 57–61 (FIITH) and R128 each bind substrate. H312 serves as a coordination point for heme. T327 contacts substrate.

This sequence belongs to the tryptophan 2,3-dioxygenase family. As to quaternary structure, homotetramer. Dimer of dimers. Requires heme as cofactor.

The enzyme catalyses L-tryptophan + O2 = N-formyl-L-kynurenine. Its pathway is amino-acid degradation; L-tryptophan degradation via kynurenine pathway; L-kynurenine from L-tryptophan: step 1/2. The protein operates within pigment biosynthesis; ommochrome biosynthesis. Functionally, heme-dependent dioxygenase that catalyzes the oxidative cleavage of the L-tryptophan (L-Trp) pyrrole ring and converts L-tryptophan to N-formyl-L-kynurenine. Catalyzes the oxidative cleavage of the indole moiety. The protein is Tryptophan 2,3-dioxygenase of Drosophila yakuba (Fruit fly).